Here is an 841-residue protein sequence, read N- to C-terminus: Outer membrane usher protein MyfC (841 aa).

The first 26 residues, 1 to 26 (MFFSLKNSVAKLIAFWAICLVLPVWA), serve as a signal peptide directing secretion. C817 and C840 form a disulfide bridge.

This sequence belongs to the fimbrial export usher family.

Its subcellular location is the cell outer membrane. In terms of biological role, involved in the export and assembly of the MyfA fimbrial subunit. The sequence is that of Outer membrane usher protein MyfC (myfC) from Yersinia enterocolitica.